Here is a 225-residue protein sequence, read N- to C-terminus: Vacuolar protein sorting-associated protein 2 homolog 1 (225 aa).

Residues 13–54 (AELLRENKRMLDKSIREIERERQGLQTQEKKLINEIKKTAKQ) are a coiled coil.

This sequence belongs to the SNF7 family. As to quaternary structure, component of the endosomal sorting required for transport complex III (ESCRT-III), composed at least of VPS2, VPS20, VPS24 and VPS32. Interacts with SKD1.

It localises to the endosome. Its function is as follows. Component of the ESCRT-III complex, which is required for multivesicular bodies (MVBs) formation and sorting of endosomal cargo proteins into MVBs. The ESCRT-III complex is probably involved in the concentration of MVB cargo. This Arabidopsis thaliana (Mouse-ear cress) protein is Vacuolar protein sorting-associated protein 2 homolog 1 (VPS2.1).